We begin with the raw amino-acid sequence, 952 residues long: Chaperone protein ClpC2, chloroplastic (952 aa).

The N-terminal 45 residues, 1–45 (MAWSIALLTPPFFGPGRHVQAKEYREPRGCVMKMSSLKAPVLRIQ), are a transit peptide targeting the chloroplast. The 143-residue stretch at 115-257 (FERFTEKAIK…RTQVIRMVGE (143 aa)) folds into the Clp R domain. 2 repeat regions span residues 118–183 (FTEK…IGRG) and 193–257 (FTPR…MVGE). Residues 278–525 (LEEYGTNLTK…RVRLRHAQLP (248 aa)) are i. 323 to 330 (GEPGVGKT) contacts ATP. A UVR domain is found at 532–567 (EKQLRQITKEKNEAVRSQDFEMAGSHRDREIELKAE). Residues 592 to 783 (VTESDIQHIV…LLIMTSNVGS (192 aa)) form an II region. 666–673 (GPTGVGKS) contacts ATP.

It belongs to the ClpA/ClpB family. ClpC subfamily. As to quaternary structure, homodimer and homohexamer. Hexamerization upon addition of ATP. Interacts with CLPT1. Interacts with CLPS1. Stably associated with the import machinery. Interacts with CLPF. The cofactor is Mg(2+). Expressed at low levels in roots and inflorescences. Expressed at very low levels in rosette leaves. Expressed in photosynthetic green tissues with high levels in young, developing leaf tissues.

The protein localises to the plastid. It is found in the chloroplast stroma. The protein resides in the chloroplast membrane. The enzyme catalyses ATP + H2O = ADP + phosphate + H(+). Its function is as follows. Molecular chaperone. May act as a suppressor of FtsH-mediated thylakoid membrane biogenesis and may enhance photoinhibition. Seems not involved in chloroplastic protein import. Probable component of the TIC-associated stromal import motor involved in inner membrane translocation. Has an ATPase activity, but no ADPase activity. Interacts with transit peptides with a positional preference. Localization of the signal sequence at the N-terminal end of a protein seems mandatory for interaction to take place. The chain is Chaperone protein ClpC2, chloroplastic from Arabidopsis thaliana (Mouse-ear cress).